The following is a 237-amino-acid chain: MQLTEQQQDKLSKVQLEESWKRSLTSFLLSPYMDSLRDFLFQQKQAQKTIYPPSKQIFNALNITPLDHVKVVILGQDPYHGPNQANGLSFSVQRGVALPPSLRNIFHELHTDLGVPVSRHGDLTKWAEQGVLLLNSVLTVEAGQPTSHHKQGWEEFTDAVIDVLNEQREHIVFILWGAYAQRKGQRINREKHLVLTAAHPSPLAANRGGFFGCKVFSKTNQYLKQHGIEPIDWQLDA.

Asp-77 acts as the Proton acceptor in catalysis.

The protein belongs to the uracil-DNA glycosylase (UDG) superfamily. UNG family.

It localises to the cytoplasm. The catalysed reaction is Hydrolyzes single-stranded DNA or mismatched double-stranded DNA and polynucleotides, releasing free uracil.. Excises uracil residues from the DNA which can arise as a result of misincorporation of dUMP residues by DNA polymerase or due to deamination of cytosine. This is Uracil-DNA glycosylase from Acinetobacter baumannii (strain SDF).